The sequence spans 697 residues: Polyribonucleotide nucleotidyltransferase (697 aa).

Residues Asp488 and Asp494 each contribute to the Mg(2+) site. In terms of domain architecture, KH spans Pro555–Ile614. The S1 motif domain occupies Gly624–Lys692.

The protein belongs to the polyribonucleotide nucleotidyltransferase family. Component of the RNA degradosome, which is a multiprotein complex involved in RNA processing and mRNA degradation. Requires Mg(2+) as cofactor.

The protein resides in the cytoplasm. It catalyses the reaction RNA(n+1) + phosphate = RNA(n) + a ribonucleoside 5'-diphosphate. Involved in mRNA degradation. Catalyzes the phosphorolysis of single-stranded polyribonucleotides processively in the 3'- to 5'-direction. The protein is Polyribonucleotide nucleotidyltransferase of Acinetobacter baylyi (strain ATCC 33305 / BD413 / ADP1).